We begin with the raw amino-acid sequence, 298 residues long: N-acetylmuramic acid 6-phosphate etherase (298 aa).

One can recognise an SIS domain in the interval 55-218 (IHAQVSGGGR…STGLMIKSGK (164 aa)). E83 functions as the Proton donor in the catalytic mechanism. E114 is an active-site residue.

Belongs to the GCKR-like family. MurNAc-6-P etherase subfamily. As to quaternary structure, homodimer.

It catalyses the reaction N-acetyl-D-muramate 6-phosphate + H2O = N-acetyl-D-glucosamine 6-phosphate + (R)-lactate. The protein operates within amino-sugar metabolism; 1,6-anhydro-N-acetylmuramate degradation. Its pathway is amino-sugar metabolism; N-acetylmuramate degradation. It participates in cell wall biogenesis; peptidoglycan recycling. In terms of biological role, specifically catalyzes the cleavage of the D-lactyl ether substituent of MurNAc 6-phosphate, producing GlcNAc 6-phosphate and D-lactate. Together with AnmK, is also required for the utilization of anhydro-N-acetylmuramic acid (anhMurNAc) either imported from the medium or derived from its own cell wall murein, and thus plays a role in cell wall recycling. The protein is N-acetylmuramic acid 6-phosphate etherase of Shigella boydii serotype 18 (strain CDC 3083-94 / BS512).